A 127-amino-acid chain; its full sequence is Holo-[acyl-carrier-protein] synthase (127 aa).

Residues D7 and E56 each coordinate Mg(2+).

Belongs to the P-Pant transferase superfamily. AcpS family. Requires Mg(2+) as cofactor.

The protein resides in the cytoplasm. It carries out the reaction apo-[ACP] + CoA = holo-[ACP] + adenosine 3',5'-bisphosphate + H(+). Functionally, transfers the 4'-phosphopantetheine moiety from coenzyme A to a Ser of acyl-carrier-protein. The sequence is that of Holo-[acyl-carrier-protein] synthase from Onion yellows phytoplasma (strain OY-M).